We begin with the raw amino-acid sequence, 400 residues long: MGVLMSKRQTVEQVQKVSLAVSAFKDGLRDRPSIRRTGELPGSRRGTVEGSVQEVQEEKEAEAGTSVVQEESSAGRAAWERLRDGRGVEPEEFDRTSRFTPPAFIRPTRKLDDDKPPEICLEPREPVVNDEMCDVCEVWTAESLFPCRVCTRVFHDGCLRRMGYIQGDSAAEVTEMAHTETGWSCHYCDNINLLLTEEEMYSLTETFQRCKVIPDCSLTLEDFLRYRHQAAKRGDRDRALSEEQEEQAARQFAALDPEHRGHIEWPDFLSHESLLLLQQLRPQNSLLRLLTVKERERARAAFLARGSGSTVSEAECRRAQHSWFCKRFPEAPSCSVSISHVGPIADSSPASSSSKSQDKTLLPTEQESRFVDWPTFLQENVLYILAARPNSAAIHLKPPG.

A lipid anchor (N-myristoyl glycine) is attached at G2. Basic and acidic residues predominate over residues 28–38 (LRDRPSIRRTG). The segment at 28-99 (LRDRPSIRRT…PEEFDRTSRF (72 aa)) is disordered. Omega-N-methylarginine is present on R36. Residue S43 is modified to Phosphoserine. T47 is subject to Phosphothreonine. S51 bears the Phosphoserine mark. The segment covering 78–97 (AWERLRDGRGVEPEEFDRTS) has biased composition (basic and acidic residues). Residues 129 to 190 (NDEMCDVCEV…TGWSCHYCDN (62 aa)) form a PHD-type zinc finger.

The polypeptide is PHD finger protein 24 (Homo sapiens (Human)).